A 452-amino-acid chain; its full sequence is UDP-N-acetylmuramoylalanine--D-glutamate ligase (452 aa).

119-125 (GSNGKTT) provides a ligand contact to ATP.

This sequence belongs to the MurCDEF family.

Its subcellular location is the cytoplasm. It carries out the reaction UDP-N-acetyl-alpha-D-muramoyl-L-alanine + D-glutamate + ATP = UDP-N-acetyl-alpha-D-muramoyl-L-alanyl-D-glutamate + ADP + phosphate + H(+). The protein operates within cell wall biogenesis; peptidoglycan biosynthesis. Functionally, cell wall formation. Catalyzes the addition of glutamate to the nucleotide precursor UDP-N-acetylmuramoyl-L-alanine (UMA). This is UDP-N-acetylmuramoylalanine--D-glutamate ligase from Streptococcus pyogenes serotype M6 (strain ATCC BAA-946 / MGAS10394).